An 89-amino-acid chain; its full sequence is Cytochrome c6 (89 aa).

Residues cysteine 15, cysteine 18, histidine 19, and methionine 61 each contribute to the heme c site.

The protein belongs to the cytochrome c family. PetJ subfamily. As to quaternary structure, monomer. Post-translationally, binds 1 heme c group covalently per subunit.

It is found in the plastid. Its subcellular location is the chloroplast thylakoid lumen. In terms of biological role, functions as an electron carrier between membrane-bound cytochrome b6-f and photosystem I in oxygenic photosynthesis. This chain is Cytochrome c6 (petJ), found in Chlorolobion braunii (Green alga).